The chain runs to 58 residues: Metallothionein (58 aa).

Residues 1–29 form a beta region; it reads PDPCCAEGTCECEEGKCKAGCKCTSCRCS. A divalent metal cation contacts are provided by Cys-4, Cys-5, Cys-10, Cys-12, Cys-17, Cys-21, Cys-23, Cys-26, Cys-28, Cys-31, Cys-34, Cys-38, Cys-40, Cys-46, Cys-50, Cys-54, Cys-56, and Cys-57. The interval 30-58 is alpha; that stretch reads PCEKCTSECECKSKEECAKNCTKPCSCCP.

Functionally, metallothioneins have a high content of cysteine residues that bind various heavy metals. Class I MTS in crustacea are involved in the sequestration of elevated levels of heavy-metal ions. The protein is Metallothionein of Potamon potamios.